Consider the following 266-residue polypeptide: 3-methyl-2-oxobutanoate hydroxymethyltransferase 2 (266 aa).

Residues aspartate 45 and aspartate 84 each contribute to the Mg(2+) site. Residues 45-46, aspartate 84, and lysine 112 contribute to the 3-methyl-2-oxobutanoate site; that span reads DS. Glutamate 114 provides a ligand contact to Mg(2+). Catalysis depends on glutamate 181, which acts as the Proton acceptor.

The protein belongs to the PanB family. Homodecamer; pentamer of dimers. Requires Mg(2+) as cofactor.

It localises to the cytoplasm. The catalysed reaction is 3-methyl-2-oxobutanoate + (6R)-5,10-methylene-5,6,7,8-tetrahydrofolate + H2O = 2-dehydropantoate + (6S)-5,6,7,8-tetrahydrofolate. Its pathway is cofactor biosynthesis; (R)-pantothenate biosynthesis; (R)-pantoate from 3-methyl-2-oxobutanoate: step 1/2. Its function is as follows. Catalyzes the reversible reaction in which hydroxymethyl group from 5,10-methylenetetrahydrofolate is transferred onto alpha-ketoisovalerate to form ketopantoate. In Pseudomonas fluorescens (strain ATCC BAA-477 / NRRL B-23932 / Pf-5), this protein is 3-methyl-2-oxobutanoate hydroxymethyltransferase 2.